Reading from the N-terminus, the 198-residue chain is Recombination protein RecR (198 aa).

The C4-type zinc-finger motif lies at Cys-57–Cys-72. In terms of domain architecture, Toprim spans Arg-80–Pro-175.

This sequence belongs to the RecR family.

May play a role in DNA repair. It seems to be involved in an RecBC-independent recombinational process of DNA repair. It may act with RecF and RecO. The protein is Recombination protein RecR of Anaeromyxobacter dehalogenans (strain 2CP-C).